A 322-amino-acid chain; its full sequence is Chromoplast-specific carotenoid-associated protein, chromoplastic (322 aa).

Residues 1 to 58 (MAFVSQFNQLPCKTLALNPPQPQLTSKPSVFPIASIGATARAAAGKSLISVRPAFKVR) constitute a chromoplast transit peptide. Residues 67–88 (GEDKDEKYGDDSSVAVAEKEEE) form a disordered region.

The protein belongs to the PAP/fibrillin family. Expressed in corollas. Not detected in fruits, stems, leaves, and roots.

The protein localises to the plastid. The protein resides in the chromoplast. May be involved in carotenoid sequestration within chromoplasts. The sequence is that of Chromoplast-specific carotenoid-associated protein, chromoplastic (CHRC) from Cucumis sativus (Cucumber).